Here is a 410-residue protein sequence, read N- to C-terminus: MSTADQEQPKVVEATPEDGTASSQKSTINAENENTKQNQSMEPQETSKGTSNDTKDPDNGEKNEEAAIDENSNVEAAERKRKHISTDFSDDDLEKEEHNDQSLQPTVENRASKDRDSSATPSSRQELEEKLDRILKKPKVRRTRRDEDDLEQYLDEKILRLKDEMNIAAQLDIDTLNKRIETGDTSLIAMQKVKLLPKVVSVLSKANLADTILDNNLLQSVRIWLEPLPDGSLPSFEIQKSLFAALNDLPVKTEHLKESGLGRVVIFYTKSKRVEAQLARLAEKLIAEWTRPIIGASDNYRDKRIMQLEFDSEKLRKKSVMDSAKNRKKKSKSGEDPTSRGSSVQTLYEQAAARRNRAAAPAQTTTDYKYAPVSNLSAVPTNARAVGVGSTLNNSEMYKRLTSRLNKKHK.

A disordered region spans residues 1–132 (MSTADQEQPK…SRQELEEKLD (132 aa)). Thr-15 carries the post-translational modification Phosphothreonine. The span at 20–52 (TASSQKSTINAENENTKQNQSMEPQETSKGTSN) shows a compositional bias: polar residues. Ser-23 is subject to Phosphoserine; by ATM or ATR. The residue at position 40 (Ser-40) is a Phosphoserine. Basic and acidic residues predominate over residues 53–65 (DTKDPDNGEKNEE). Residue Ser-85 is modified to Phosphoserine. Thr-86 carries the phosphothreonine modification. At Ser-89 the chain carries Phosphoserine. The 78-residue stretch at 219 to 296 (QSVRIWLEPL…AEWTRPIIGA (78 aa)) folds into the TFIIS N-terminal domain. The interval 318–346 (KSVMDSAKNRKKKSKSGEDPTSRGSSVQT) is disordered.

It belongs to the IWS1 family. As to quaternary structure, interacts with ABD1, RBP1, SPT5 and SPT6.

It localises to the nucleus. Transcription factor involved in RNA polymerase II transcription regulation. May function in both SPT15/TBP post-recruitment and recruitment steps of transcription. In Saccharomyces cerevisiae (strain ATCC 204508 / S288c) (Baker's yeast), this protein is Transcription factor SPN1 (SPN1).